The chain runs to 358 residues: 3-dehydroquinate synthase (358 aa).

NAD(+)-binding positions include aspartate 70–lysine 75, glycine 104–aspartate 108, threonine 128–threonine 129, lysine 141, lysine 150, and cysteine 168–threonine 171. Zn(2+) is bound by residues glutamate 183, histidine 246, and histidine 263.

Belongs to the sugar phosphate cyclases superfamily. Dehydroquinate synthase family. It depends on Co(2+) as a cofactor. Zn(2+) serves as cofactor. The cofactor is NAD(+).

Its subcellular location is the cytoplasm. The enzyme catalyses 7-phospho-2-dehydro-3-deoxy-D-arabino-heptonate = 3-dehydroquinate + phosphate. It participates in metabolic intermediate biosynthesis; chorismate biosynthesis; chorismate from D-erythrose 4-phosphate and phosphoenolpyruvate: step 2/7. Its function is as follows. Catalyzes the conversion of 3-deoxy-D-arabino-heptulosonate 7-phosphate (DAHP) to dehydroquinate (DHQ). The chain is 3-dehydroquinate synthase from Shewanella woodyi (strain ATCC 51908 / MS32).